The chain runs to 963 residues: VPS35 endosomal protein-sorting factor-like (963 aa).

The disordered stretch occupies residues 43-69; that stretch reads SKTKKVNRKGSTSSTSSSSSSSVVDPL. The segment covering 53 to 69 has biased composition (low complexity); that stretch reads STSSTSSSSSSSVVDPL. Residue S265 is modified to Phosphoserine. The chain crosses the membrane as a helical span at residues 703–719; the sequence is ACVAYCFITIPSLAGIF.

This sequence belongs to the VPS35L family. As to quaternary structure, component of the heterotrimeric retriever complex formed by VPS26C, VPS29 and VPS35L. Interacts with VPS29. Interacts with COMMD1, CCDC93 and CCDC22; associates with the CCC (COMMD/CCDC22/CCDC93) complex which contains at least COMMD1 (and possibly other COMM domain-containing proteins), CCDC22 and CCDC93. Interacts with WASHC1, WASHC2A and WASHC2C. Interacts with SNX17 and SNX31.

It is found in the membrane. The protein localises to the endosome. In terms of biological role, acts as a component of the retriever complex. The retriever complex is a heterotrimeric complex related to retromer cargo-selective complex (CSC) and essential for retromer-independent retrieval and recycling of numerous cargos such as integrin alpha-5/beta-1 (ITGA5:ITGB1). The recruitment of the retriever complex to the endosomal membrane involves CCC and WASH complexes. In the endosomes, drives the retrieval and recycling of NxxY-motif-containing cargo proteins by coupling to SNX17, a cargo essential for the homeostatic maintenance of numerous cell surface proteins associated with processes that include cell migration, cell adhesion, nutrient supply and cell signaling. Involved in copper-dependent ATP7A trafficking between the trans-Golgi network and vesicles in the cell periphery; the function is proposed to depend on its association with the CCC complex and cooperation with the WASH complex on early endosomes. Seems not to be required for CCC complex stability. Functionally, (Microbial infection) The heterotrimeric retriever complex, in collaboration with the CCC complex, mediates the exit of human papillomavirus to the cell surface. The polypeptide is VPS35 endosomal protein-sorting factor-like (Homo sapiens (Human)).